An 841-amino-acid chain; its full sequence is Taste receptor type 1 member 1 (841 aa).

The signal sequence occupies residues 1–20; sequence MLLCTARLVGLQLLISCCWA. Residues 21–567 lie on the Extracellular side of the membrane; it reads FACHSTESSP…VFLALREHTS (547 aa). Residues N87, N88, N95, N291, N479, and N529 are each glycosylated (N-linked (GlcNAc...) asparagine). Residues 568–588 form a helical membrane-spanning segment; that stretch reads WVLLAANTLLLLLLLGTAGLF. At 589–603 the chain is on the cytoplasmic side; it reads AWHLDTPVVRSAGGR. A helical transmembrane segment spans residues 604–624; that stretch reads LCFLMLGSLAAGSGSLYGFFG. Residues 625-639 are Extracellular-facing; sequence EPTRPACLLRQALFA. The chain crosses the membrane as a helical span at residues 640 to 660; it reads LGFTIFLSCLTVRSFQLIIIF. The Cytoplasmic portion of the chain corresponds to 661 to 680; the sequence is KFSTKVPTFYHAWVQNHGAG. A helical membrane pass occupies residues 681–701; sequence LFVMISSAAQLLICLTWLVVW. Residues 702-725 are Extracellular-facing; it reads TPLPAREYQRFPHLVMLECTETNS. Residues 726–746 traverse the membrane as a helical segment; it reads LGFILAFLYNGLLSISAFACS. The Cytoplasmic portion of the chain corresponds to 747-761; sequence YLGKDLPENYNEAKC. A helical membrane pass occupies residues 762–782; it reads VTFSLLFNFVSWIAFFTTASV. The Extracellular portion of the chain corresponds to 783–795; it reads YDGKYLPAANMMA. Residues 796–816 traverse the membrane as a helical segment; the sequence is GLSSLSSGFGGYFLPKCYVIL. At 817 to 841 the chain is on the cytoplasmic side; the sequence is CRPDLNSTEHFQASIQDYTRRCGST.

This sequence belongs to the G-protein coupled receptor 3 family. TAS1R subfamily. Forms heterodimers with TAS1R3.

It localises to the cell membrane. Functionally, putative taste receptor. TAS1R1/TAS1R3 responds to the umami taste stimulus (the taste of monosodium glutamate). Sequence differences within and between species can significantly influence the selectivity and specificity of taste responses. This Homo sapiens (Human) protein is Taste receptor type 1 member 1 (TAS1R1).